The following is a 436-amino-acid chain: Ribulose bisphosphate carboxylase large chain (436 aa).

Residues N104 and T154 each contribute to the substrate site. K156 (proton acceptor) is an active-site residue. K158 contributes to the substrate binding site. 3 residues coordinate Mg(2+): K182, D184, and E185. Residue K182 is modified to N6-carboxylysine. H275 (proton acceptor) is an active-site residue. Substrate is bound by residues R276, H308, and S360.

The protein belongs to the RuBisCO large chain family. Type I subfamily. Heterohexadecamer of 8 large chains and 8 small chains. Mg(2+) is required as a cofactor.

It is found in the plastid. The protein resides in the chloroplast. It catalyses the reaction 2 (2R)-3-phosphoglycerate + 2 H(+) = D-ribulose 1,5-bisphosphate + CO2 + H2O. The catalysed reaction is D-ribulose 1,5-bisphosphate + O2 = 2-phosphoglycolate + (2R)-3-phosphoglycerate + 2 H(+). In terms of biological role, ruBisCO catalyzes two reactions: the carboxylation of D-ribulose 1,5-bisphosphate, the primary event in carbon dioxide fixation, as well as the oxidative fragmentation of the pentose substrate in the photorespiration process. Both reactions occur simultaneously and in competition at the same active site. The protein is Ribulose bisphosphate carboxylase large chain of Euglena myxocylindracea.